Consider the following 246-residue polypeptide: Adenosylcobinamide-GDP ribazoletransferase (246 aa).

6 helical membrane-spanning segments follow: residues 34-54, 59-79, 113-133, 136-156, 181-201, and 203-223; these read IVTF…VALL, CGVP…TGGF, GGLA…ELLL, IHPI…AALL, TLVT…LQGL, and AALI…RTLG.

It belongs to the CobS family. Mg(2+) serves as cofactor.

Its subcellular location is the cell inner membrane. It carries out the reaction alpha-ribazole + adenosylcob(III)inamide-GDP = adenosylcob(III)alamin + GMP + H(+). The enzyme catalyses alpha-ribazole 5'-phosphate + adenosylcob(III)inamide-GDP = adenosylcob(III)alamin 5'-phosphate + GMP + H(+). Its pathway is cofactor biosynthesis; adenosylcobalamin biosynthesis; adenosylcobalamin from cob(II)yrinate a,c-diamide: step 7/7. In terms of biological role, joins adenosylcobinamide-GDP and alpha-ribazole to generate adenosylcobalamin (Ado-cobalamin). Also synthesizes adenosylcobalamin 5'-phosphate from adenosylcobinamide-GDP and alpha-ribazole 5'-phosphate. This is Adenosylcobinamide-GDP ribazoletransferase from Klebsiella pneumoniae subsp. pneumoniae (strain ATCC 700721 / MGH 78578).